Here is a 190-residue protein sequence, read N- to C-terminus: UPF0301 protein PSPPH_0476 (190 aa).

The protein belongs to the UPF0301 (AlgH) family.

The sequence is that of UPF0301 protein PSPPH_0476 from Pseudomonas savastanoi pv. phaseolicola (strain 1448A / Race 6) (Pseudomonas syringae pv. phaseolicola (strain 1448A / Race 6)).